The primary structure comprises 520 residues: Hydroxymethylglutaryl-CoA synthase, cytoplasmic (520 aa).

At S4 the chain carries Phosphoserine. (3S)-3-hydroxy-3-methylglutaryl-CoA contacts are provided by D43 and A44. Position 44-46 (A44–K46) interacts with CoA. K46 is subject to N6-acetyllysine. E95 serves as the catalytic Proton donor/acceptor. Residues C129, N167, T171, S221, and H264 each contribute to the (3S)-3-hydroxy-3-methylglutaryl-CoA site. The active-site Acyl-thioester intermediate is the C129. A CoA-binding site is contributed by N167. Residue S221 coordinates CoA. H264 functions as the Proton donor/acceptor in the catalytic mechanism. The CoA site is built by K269 and K273. (3S)-3-hydroxy-3-methylglutaryl-CoA contacts are provided by K273, N343, and S377. K273 carries the N6-acetyllysine modification. Positions T488–H520 are disordered. 2 positions are modified to phosphoserine: S495 and S516. Positions S507–H520 are enriched in polar residues.

It belongs to the thiolase-like superfamily. HMG-CoA synthase family. Homodimer.

Its subcellular location is the cytoplasm. The catalysed reaction is acetoacetyl-CoA + acetyl-CoA + H2O = (3S)-3-hydroxy-3-methylglutaryl-CoA + CoA + H(+). It participates in metabolic intermediate biosynthesis; (R)-mevalonate biosynthesis; (R)-mevalonate from acetyl-CoA: step 2/3. In terms of biological role, catalyzes the condensation of acetyl-CoA with acetoacetyl-CoA to form HMG-CoA, which is converted by HMG-CoA reductase (HMGCR) into mevalonate, a precursor for cholesterol synthesis. This chain is Hydroxymethylglutaryl-CoA synthase, cytoplasmic, found in Mus musculus (Mouse).